A 228-amino-acid polypeptide reads, in one-letter code: Cytochrome b5 domain-containing protein 1 (228 aa).

The Cytochrome b5 heme-binding domain occupies 17-83; sequence RRYFTPSEVA…DPQTRDIRKH (67 aa). His-83 contacts heme.

It belongs to the cytochrome b5 family.

The protein resides in the cytoplasm. It localises to the cytoskeleton. The protein localises to the cilium axoneme. Functionally, radial spoke stalk protein that binds heme under oxidizing conditions. Required for the coordinated beating of multiple cilia maybe by functioning in a redox signaling pathway. The sequence is that of Cytochrome b5 domain-containing protein 1 (Cyb5d1) from Mus musculus (Mouse).